The following is a 298-amino-acid chain: 3-deoxy-manno-octulosonate cytidylyltransferase (298 aa).

Residues 22–42 (VWVLHGLALGAAAAAAAVAYL) form a helical membrane-spanning segment.

This sequence belongs to the KdsB family. Requires Mg(2+) as cofactor. Ubiquitous.

It localises to the membrane. It catalyses the reaction 3-deoxy-alpha-D-manno-oct-2-ulosonate + CTP = CMP-3-deoxy-beta-D-manno-octulosonate + diphosphate. It functions in the pathway nucleotide-sugar biosynthesis; CMP-3-deoxy-D-manno-octulosonate biosynthesis; CMP-3-deoxy-D-manno-octulosonate from 3-deoxy-D-manno-octulosonate and CTP: step 1/1. Catalyzes the production of the sugar nucleotide CMP-3-deoxy-D-manno-octulosonate (CMP-KDO). CTP is the preferred nucleotide donor, and it can partially be replaced with UTP but not with ATP. Activates KDO during the biosynthesis of rhamnogalacturonan II (RG-II), a structurally complex pectic polysaccharide of the primary cell wall. RG-II is essential for the cell wall integrity of rapidly growing tissues and pollen tube growth and elongation. This Zea mays (Maize) protein is 3-deoxy-manno-octulosonate cytidylyltransferase.